We begin with the raw amino-acid sequence, 186 residues long: Translation initiation factor IF-3 (186 aa).

It belongs to the IF-3 family. In terms of assembly, monomer.

The protein localises to the cytoplasm. Functionally, IF-3 binds to the 30S ribosomal subunit and shifts the equilibrium between 70S ribosomes and their 50S and 30S subunits in favor of the free subunits, thus enhancing the availability of 30S subunits on which protein synthesis initiation begins. The sequence is that of Translation initiation factor IF-3 from Borrelia garinii subsp. bavariensis (strain ATCC BAA-2496 / DSM 23469 / PBi) (Borreliella bavariensis).